The following is a 198-amino-acid chain: Syndecan-4 (198 aa).

The signal sequence occupies residues 1–18 (MAPARLFALLLLFVGGVA). Topologically, residues 19–145 (ESIRETEVID…QGSNIFERTE (127 aa)) are extracellular. 3 O-linked (Xyl...) (glycosaminoglycan) serine glycosylation sites follow: Ser39, Ser61, and Ser63. Ser95 carries O-linked (Xyl...) (chondroitin sulfate) serine glycosylation. The chain crosses the membrane as a helical span at residues 146–170 (VLAALIVGGIVGILFAVFLILLLMY). Residues 171-198 (RMKKKDEGSYDLGKKPIYKKAPTNEFYA) are Cytoplasmic-facing.

The protein belongs to the syndecan proteoglycan family. As to quaternary structure, homodimer. Interacts with CDCP1 and SDCBP. Interacts (via its cytoplasmic domain) with GIPC (via its PDZ domain). Interacts (via its cytoplasmic domain) with NUDT16L1. Interacts with DNM2; this interaction is markedly enhanced at focal ahesion site upon induction of focal adhesions and stress-fiber formation. Post-translationally, shedding is enhanced by a number of factors such as heparanase, thrombin or EGF. Also by stress and wound healing. PMA-mediated shedding is inhibited by TIMP3. O-glycosylated; contains both chondroitin sulfate and heparan sulfate. Ser-39, Ser-61 and Ser-63 can all be modified by either chondroitin sulfate or heparan sulfate, and the protein exists in forms that contain only chondroitin sulfate, only heparan sulfate and both chondroitin sulfate and heparan sulfate.

It is found in the membrane. Its subcellular location is the secreted. Its function is as follows. Cell surface proteoglycan which regulates exosome biogenesis in concert with SDCBP and PDCD6IP. The sequence is that of Syndecan-4 from Pongo abelii (Sumatran orangutan).